The following is a 217-amino-acid chain: uncharacterized protein (217 aa).

The PilZ domain occupies 98 to 203; it reads QRRQYVRTDA…GDQQALLQYC (106 aa).

This is an uncharacterized protein from Bacillus subtilis (strain 168).